Consider the following 328-residue polypeptide: Lipoyl synthase (328 aa).

The [4Fe-4S] cluster site is built by cysteine 57, cysteine 62, cysteine 68, cysteine 83, cysteine 87, cysteine 90, and serine 298. A Radical SAM core domain is found at 69–287; the sequence is WSRGTATFML…REEGLSLGFL (219 aa).

It belongs to the radical SAM superfamily. Lipoyl synthase family. It depends on [4Fe-4S] cluster as a cofactor.

The protein resides in the cytoplasm. It catalyses the reaction [[Fe-S] cluster scaffold protein carrying a second [4Fe-4S](2+) cluster] + N(6)-octanoyl-L-lysyl-[protein] + 2 oxidized [2Fe-2S]-[ferredoxin] + 2 S-adenosyl-L-methionine + 4 H(+) = [[Fe-S] cluster scaffold protein] + N(6)-[(R)-dihydrolipoyl]-L-lysyl-[protein] + 4 Fe(3+) + 2 hydrogen sulfide + 2 5'-deoxyadenosine + 2 L-methionine + 2 reduced [2Fe-2S]-[ferredoxin]. It participates in protein modification; protein lipoylation via endogenous pathway; protein N(6)-(lipoyl)lysine from octanoyl-[acyl-carrier-protein]: step 2/2. In terms of biological role, catalyzes the radical-mediated insertion of two sulfur atoms into the C-6 and C-8 positions of the octanoyl moiety bound to the lipoyl domains of lipoate-dependent enzymes, thereby converting the octanoylated domains into lipoylated derivatives. This Deinococcus geothermalis (strain DSM 11300 / CIP 105573 / AG-3a) protein is Lipoyl synthase.